Consider the following 94-residue polypeptide: Neutrophil defensin 1 (94 aa).

The first 19 residues, 1–19 (MRTLAILAAILLVALQAQA), serve as a signal peptide directing secretion. Positions 20-64 (EPLQARADEVAAAPEQIPADNPEVVVSLAWDESLAPKHPGSRKNV) are excised as a propeptide. 3 disulfide bridges follow: Cys66–Cys94, Cys68–Cys83, and Cys73–Cys93. Arg78 is modified (ADP-ribosylarginine; by ART1). Tyr85 carries the post-translational modification Phosphotyrosine. Arg88 carries the ADP-ribosylarginine; by ART1 modification.

This sequence belongs to the alpha-defensin family. As to quaternary structure, tetramer. Dimer. Interacts with RETN. Post-translationally, ADP-ribosylation drastically reduces cytotoxic and antibacterial activities, and enhances IL8 production.

It is found in the secreted. In terms of biological role, effector molecule of the innate immune system that acts via antibiotic-like properties against a broad array of infectious agents including bacteria, fungi, and viruses or by promoting the activation and maturation of some APCs. Interacts with the essential precursor of cell wall synthesis lipid II to inhibit bacterial cell wall synthesis. Inhibits adenovirus infection via inhibition of viral disassembly at the vertex region, thereby restricting the release of internal capsid protein pVI, which is required for endosomal membrane penetration during cell entry. In addition, interaction with adenovirus capsid leads to the redirection of viral particles to TLR4 thereby promoting a NLRP3-mediated inflammasome response and interleukin 1-beta (IL-1beta) release. Induces the production of proinflammatory cytokines including type I interferon (IFN) in plasmacytoid dendritic cells (pDCs) by triggering the degradation of NFKBIA and nuclear translocation of IRF1, both of which are required for activation of pDCs. This is Neutrophil defensin 1 (DEFA1) from Pan troglodytes (Chimpanzee).